A 326-amino-acid polypeptide reads, in one-letter code: Cytosolic sulfotransferase 12 (326 aa).

Position 75 to 80 (75 to 80) interacts with 3'-phosphoadenylyl sulfate; the sequence is KSGTTW. Residue His-140 is the Proton acceptor of the active site. 3'-phosphoadenylyl sulfate is bound by residues Arg-162, Ser-170, Tyr-228, and 290 to 292; that span reads RKG.

It belongs to the sulfotransferase 1 family. As to quaternary structure, dimer. As to expression, expressed in the aerial parts of seedlings, in roots, leaves and flowers. Not detected in stems and siliques.

The protein resides in the cytoplasm. Sulfotransferase that utilizes 3'-phospho-5'-adenylyl sulfate (PAPS) as sulfonate donor to catalyze the stereospecific sulfate conjugation of 24-epibrassinosteroids. Preferred substrates are 24-epicathasterone and 6-deoxo-24-epicathasterone. Low activity with 22-deoxy-24-epiteasterone. No activity with 24-epimers catasterone and brassinolide. Sulfonates salicylic acid. May be involved in detoxification. Enhances plant response to pathogen infection and contributes to long distance signaling in systemic acquired resistance (SAR). The chain is Cytosolic sulfotransferase 12 (SOT12) from Arabidopsis thaliana (Mouse-ear cress).